A 546-amino-acid chain; its full sequence is Chaperonin GroEL (546 aa).

ATP contacts are provided by residues 30–33 (TLGP), Lys-51, 87–91 (DGTTT), Gly-415, 479–481 (NAA), and Asp-495.

The protein belongs to the chaperonin (HSP60) family. Forms a cylinder of 14 subunits composed of two heptameric rings stacked back-to-back. Interacts with the co-chaperonin GroES.

Its subcellular location is the cytoplasm. The catalysed reaction is ATP + H2O + a folded polypeptide = ADP + phosphate + an unfolded polypeptide.. Its function is as follows. Together with its co-chaperonin GroES, plays an essential role in assisting protein folding. The GroEL-GroES system forms a nano-cage that allows encapsulation of the non-native substrate proteins and provides a physical environment optimized to promote and accelerate protein folding. This chain is Chaperonin GroEL, found in Stutzerimonas stutzeri (strain A1501) (Pseudomonas stutzeri).